Reading from the N-terminus, the 1450-residue chain is Collagen alpha-1(I) chain (1450 aa).

The first 22 residues, 1 to 22 (MFSFVDNRLLVLLAACVLLVRA), serve as a signal peptide directing secretion. Positions 23–148 (LDQEDIESGL…PPGLGGNFAP (126 aa)) are cleaved as a propeptide — N-terminal propeptide. The region spanning 31-90 (GLCHQEGTTYSDKDVWKPEPCVICVCDNGNIMCDDVTCGDYPVDCPNAEIPFGECCPVCP) is the VWFC domain. The segment at 97 to 1201 (YSEQTGVEGP…EPKSHGDGRY (1105 aa)) is disordered. A compositionally biased stretch (basic and acidic residues) spans 106–116 (PKGEVGPKGDR). Positions 130–140 (LPGPPGPPGPP) are enriched in pro residues. Gln-149 carries the post-translational modification Pyrrolidone carboxylic acid. At Lys-157 the chain carries Allysine. A compositionally biased stretch (pro residues) spans 166–181 (PMGPMGPRGPPGPSGS). Residues Pro-176, Pro-182, Pro-194, Pro-197, Pro-212, Pro-227, Pro-242, and Pro-248 each carry the 4-hydroxyproline modification. The segment covering 182–206 (PGPQGFQGPSGEPGEPGAAGALGPR) has biased composition (low complexity). Positions 215–229 (NGDDGESGKPGRPGE) are enriched in basic and acidic residues. Residue Lys-251 is modified to 5-hydroxylysine; alternate. An O-linked (Gal...) hydroxylysine; alternate glycan is attached at Lys-251. Over residues 266-292 (NGPAGPKGEPGNPGENGAPGQAGPRGL) the composition is skewed to low complexity. A 4-hydroxyproline mark is found at Pro-275, Pro-278, Pro-284, Pro-293, Pro-299, Pro-314, Pro-320, Pro-329, Pro-332, Pro-359, Pro-362, Pro-374, Pro-380, Pro-389, Pro-395, Pro-398, and Pro-413. The segment covering 317–331 (AGPPGPTGPTGPPGF) has biased composition (pro residues). Residues 352 to 374 (PQGARGEPGAPGPAGAAGPSGNP) are compositionally biased toward low complexity. Residues 378-387 (GQPGGKGATG) are compositionally biased toward gly residues. Low complexity predominate over residues 388–443 (SPGIAGAPGFPGARGAPGPQGPAGAPGPKGNNGEPGAQGNKGEPGAKGEPGPAGVQ). Lys-416 is subject to 5-hydroxylysine. 4-hydroxyproline is present on residues Pro-422, Pro-437, Pro-446, Pro-461, Pro-467, Pro-476, and Pro-482. The span at 471–480 (GERGGPGSRG) shows a compositional bias: gly residues. The residue at position 491 (Lys-491) is a 5-hydroxylysine. Pro-494, Pro-515, Pro-521, Pro-530, Pro-533, Pro-551, Pro-569, Pro-578, Pro-590, Pro-608, Pro-626, Pro-632, Pro-644, Pro-650, Pro-656, and Pro-668 each carry 4-hydroxyproline. Composition is skewed to low complexity over residues 568–578 (FPGPKGAAGEP) and 586–596 (VAGPPGATGAP). A compositionally biased stretch (low complexity) spans 637–650 (PAGEAGKPGEQGAP). Positions 669–678 (GERGGQGPAG) are enriched in gly residues. Residues 679–701 (AQGPRGSPGSPGNDGAKGEAGAA) are compositionally biased toward low complexity. Pro-689, Pro-704, Pro-710, Pro-716, and Pro-725 each carry 4-hydroxyproline. Gly residues predominate over residues 702-711 (GAPGGRGPPG). Residue Lys-737 is modified to 5-hydroxylysine. Residues Pro-743, Pro-758, Pro-764, Pro-785, Pro-791, Pro-794, Pro-803, Pro-809, Pro-827, Pro-836, and Pro-845 each carry the 4-hydroxyproline modification. Residues 796–806 (PAGICGPPGAD) are compositionally biased toward low complexity. Residues 817–869 (DAGPKGDAGAPGPAGPTGAPGPAGNVGAPGPKGTRGAAGPPGATGFPGAAGRL) show a composition bias toward low complexity. Lys-848 is modified (5-hydroxylysine). Pro-857 and Pro-863 each carry 4-hydroxyproline. A 3-hydroxyproline modification is found at Pro-871. A 4-hydroxyproline mark is found at Pro-872, Pro-881, Pro-884, Pro-908, Pro-914, Pro-923, Pro-932, Pro-950, Pro-962, Pro-968, Pro-983, Pro-989, Pro-995, Pro-1004, and Pro-1010. The segment covering 917-943 (SGEKGSPGSDGPAGAPGIPGPQGIAGQ) has biased composition (low complexity). Residues 982-997 (PPGPSGPPGLGGPPGE) are compositionally biased toward pro residues. The residue at position 1019 (Lys-1019) is a 5-hydroxylysine. Residues 1028-1043 (SGPPGAPGAPGAPGPV) show a composition bias toward pro residues. 4-hydroxyproline is present on residues Pro-1031, Pro-1034, and Pro-1037. Residues 1064 to 1078 (AGPSGVRGAPGPAGA) are compositionally biased toward low complexity. The span at 1079–1093 (RGDKGEAGEQGERGM) shows a compositional bias: basic and acidic residues. Lys-1082 carries the post-translational modification 5-hydroxylysine. Lys-1094 carries the post-translational modification 5-hydroxylysine; alternate. The O-linked (Gal...) hydroxylysine; alternate glycan is linked to Lys-1094. A 4-hydroxyproline mark is found at Pro-1106 and Pro-1109. A compositionally biased stretch (pro residues) spans 1120–1129 (PSGPAGPRGP). 4-hydroxyproline occurs at positions 1130 and 1145. The span at 1130–1145 (PGSSGSTGKDGVNGLP) shows a compositional bias: low complexity. Residue Pro-1150 is modified to 3-hydroxyproline. A 4-hydroxyproline modification is found at Pro-1151. Pro residues predominate over residues 1163–1178 (AGPPGPPGPPGPPGPP). Pro-1165 is modified (3-hydroxyproline). Pro-1166 carries the post-translational modification 4-hydroxyproline. 3-hydroxyproline is present on Pro-1168. Pro-1169 carries the post-translational modification 4-hydroxyproline. A 3-hydroxyproline modification is found at Pro-1171. 4-hydroxyproline is present on residues Pro-1172, Pro-1175, and Pro-1178. Lys-1194 carries the post-translational modification Allysine. Residues 1205 to 1450 (DDANVVRDRD…GIDIGPVCFL (246 aa)) constitute a propeptide, C-terminal propeptide. One can recognise a Fibrillar collagen NC1 domain in the interval 1215 to 1450 (LEVDTTLKSL…GIDIGPVCFL (236 aa)). 3 disulfide bridges follow: Cys-1245-Cys-1277, Cys-1285-Cys-1448, and Cys-1356-Cys-1401. The Ca(2+) site is built by Asp-1263, Asn-1265, Gln-1266, Cys-1268, and Asp-1271. A glycan (N-linked (GlcNAc...) asparagine) is linked at Asn-1351.

It belongs to the fibrillar collagen family. In terms of assembly, trimers of one alpha 2(I) and two alpha 1(I) chains. In terms of processing, contains mostly 4-hydroxyproline. Proline residues at the third position of the tripeptide repeating unit (G-X-Y) are hydroxylated in some or all of the chains. Post-translationally, contains 3-hydroxyproline at a few sites. This modification occurs on the first proline residue in the sequence motif Gly-Pro-Hyp, where Hyp is 4-hydroxyproline. Lysine residues at the third position of the tripeptide repeating unit (G-X-Y) are 5-hydroxylated in some or all of the chains. In terms of processing, O-glycosylated on hydroxylated lysine residues. The O-linked glycan consists of a Glc-Gal disaccharide.

It is found in the secreted. The protein localises to the extracellular space. Its subcellular location is the extracellular matrix. Functionally, type I collagen is a member of group I collagen (fibrillar forming collagen). The protein is Collagen alpha-1(I) chain (COL1A1) of Cynops pyrrhogaster (Japanese fire-bellied newt).